A 185-amino-acid polypeptide reads, in one-letter code: Ribosome-recycling factor (185 aa).

This sequence belongs to the RRF family.

The protein resides in the cytoplasm. Responsible for the release of ribosomes from messenger RNA at the termination of protein biosynthesis. May increase the efficiency of translation by recycling ribosomes from one round of translation to another. The sequence is that of Ribosome-recycling factor from Aliivibrio fischeri (strain ATCC 700601 / ES114) (Vibrio fischeri).